Here is a 718-residue protein sequence, read N- to C-terminus: Phenylalanine--tRNA ligase beta subunit (718 aa).

The tRNA-binding domain occupies 39–153; that stretch reads LNEISGIKFG…IFDLESNPLK (115 aa). The B5 domain maps to 386–460; the sequence is SKKTFLDLNY…RFYGLEKLKD (75 aa). The Mg(2+) site is built by D438, D444, and D448.

Belongs to the phenylalanyl-tRNA synthetase beta subunit family. Type 1 subfamily. As to quaternary structure, tetramer of two alpha and two beta subunits. It depends on Mg(2+) as a cofactor.

It localises to the cytoplasm. It catalyses the reaction tRNA(Phe) + L-phenylalanine + ATP = L-phenylalanyl-tRNA(Phe) + AMP + diphosphate + H(+). The sequence is that of Phenylalanine--tRNA ligase beta subunit from Mesomycoplasma hyopneumoniae (strain 232) (Mycoplasma hyopneumoniae).